A 395-amino-acid polypeptide reads, in one-letter code: Phosphoglycerate kinase (395 aa).

Residues 20 to 22 (DFN), arginine 36, 59 to 62 (HLGR), arginine 120, and arginine 157 each bind substrate. Residues lysine 208, glycine 296, glutamate 327, and 353 to 356 (GGDT) each bind ATP.

It belongs to the phosphoglycerate kinase family. Monomer.

It is found in the cytoplasm. The catalysed reaction is (2R)-3-phosphoglycerate + ATP = (2R)-3-phospho-glyceroyl phosphate + ADP. It participates in carbohydrate degradation; glycolysis; pyruvate from D-glyceraldehyde 3-phosphate: step 2/5. The protein is Phosphoglycerate kinase of Tropheryma whipplei (strain TW08/27) (Whipple's bacillus).